Here is a 569-residue protein sequence, read N- to C-terminus: Proline--tRNA ligase (569 aa).

Belongs to the class-II aminoacyl-tRNA synthetase family. ProS type 1 subfamily. In terms of assembly, homodimer.

The protein localises to the cytoplasm. It carries out the reaction tRNA(Pro) + L-proline + ATP = L-prolyl-tRNA(Pro) + AMP + diphosphate. In terms of biological role, catalyzes the attachment of proline to tRNA(Pro) in a two-step reaction: proline is first activated by ATP to form Pro-AMP and then transferred to the acceptor end of tRNA(Pro). As ProRS can inadvertently accommodate and process non-cognate amino acids such as alanine and cysteine, to avoid such errors it has two additional distinct editing activities against alanine. One activity is designated as 'pretransfer' editing and involves the tRNA(Pro)-independent hydrolysis of activated Ala-AMP. The other activity is designated 'posttransfer' editing and involves deacylation of mischarged Ala-tRNA(Pro). The misacylated Cys-tRNA(Pro) is not edited by ProRS. In Nitratiruptor sp. (strain SB155-2), this protein is Proline--tRNA ligase.